The primary structure comprises 432 residues: Transcription factor E2F1 (432 aa).

Disordered stretches follow at residues 39–85 and 98–126; these read DVGA…GRPP and YLAGSSGPFRGRGRHPGKGVKSPGEKSRY. Positions 65-106 are cyclin A:CDK2 binding; the sequence is ATPQAPRPAPSAPRPALGRPPVKRRLDLETDHQYLAGSSGPF. The tract at residues 87–189 is interaction with BIRC2/c-IAP1; sequence KRRLDLETDH…KKSKNHIQWL (103 aa). A DNA-binding region spans residues 108 to 192; the sequence is GRGRHPGKGV…KNHIQWLGSR (85 aa). An N6-acetyllysine mark is found at K115, K118, and K123. The segment at 151–172 is leucine-zipper; that stretch reads LNWAAEVLKVQKRRIYDITNVL. Residues 156–192 carry the DEF box motif; that stretch reads EVLKVQKRRIYDITNVLEGIQLIAKKSKNHIQWLGSR. Residue K183 is modified to N6-methyllysine; by SETD7. A required for interaction with TRIM28 region spans residues 190–377; that stretch reads GSRTMVGIGQ…RLSPLVAADS (188 aa). Positions 193 to 282 are dimerization; the sequence is TMVGIGQRLE…AVDSAETFQI (90 aa). The segment at 297–342 is disordered; sequence PEESAEGISPGRTSYQETSGEDRNADSGTAGPPPSPPSTSPTLDPS. The tract at residues 363–432 is transactivation; it reads PMEEDRLSPL…DFGDLTPLDF (70 aa). S370 and S398 each carry phosphoserine. The segment at 404 to 421 is RB1 binding; that stretch reads VDYHFGLEEGEGIRDLFD. At T428 the chain carries Phosphothreonine.

Belongs to the E2F/DP family. Component of the DRTF1/E2F transcription factor complex. Forms heterodimers with DP family members. The E2F1 complex binds specifically hypophosphorylated RB1, the interaction represses E2F1-driven transcription. During the cell cycle, RB1 becomes phosphorylated in mid-to-late G1 phase, detaches from the DRTF1/E2F complex, rendering E2F transcriptionally active. Interacts with TRRAP, which probably mediates its interaction with histone acetyltransferase complexes, leading to transcription activation. Binds TOPBP1 and EAPP. Interacts with ARID3A. Interacts with TRIM28; the interaction inhibits E2F1 acetylation through recruiting HDAC1 and represses its transcriptional activity. Interaction with KAT2B; the interaction acetylates E2F1 enhancing its DNA-binding and transcriptional activity. Interacts with BIRC2/c-IAP1 (via BIR domains). The complex TFDP1:E2F1 interacts with CEBPA; the interaction prevents CEBPA binding to target genes promoters and represses its transcriptional activity. Interacts with RRP1B. Interacts with HCFC1. Interacts with KMT2E; the interaction is probably indirect and is mediated via HCFC1. Interacts with DCAF5 and L3MBTL3; the interaction requires methylation at Lys-183 and is necessary to target E2F1 for ubiquitination by the CRL4-DCAF5 E3 ubiquitin ligase complex. In terms of processing, phosphorylated by CDK2 and cyclin A-CDK2 in the S-phase. Phosphorylation by CHEK2 stabilizes E2F1 upon DNA damage and regulates its effect on transcription and apoptosis. Phosphorylation at Ser-398 by GSK3B promotes interaction with USP11, leading to its deubiquitination and stabilization. Ubiquitinated via 'Lys-63'-linked ubiquitin, leading to its degradation. Deubiquitinated by USP11 following phosphorylation by GSK3B, promoting its stability. Post-translationally, acetylation stimulates DNA-binding. Enhanced under stress conditions such as DNA damage and inhibited by retinoblastoma protein RB1. Regulated by KAP1/TRIM28 which recruits HDAC1 to E2F1 resulting in deacetylation. In terms of processing, methylation at Lys-183 by SETD7 promotes E2F1 ubiquitin-dependent proteasomal degradation.

The protein localises to the nucleus. BIRC2/c-IAP1 stimulates its transcriptional activity. Functionally, transcription activator that binds DNA cooperatively with DP proteins through the E2 recognition site, 5'-TTTC[CG]CGC-3' found in the promoter region of a number of genes whose products are involved in cell cycle regulation or in DNA replication. The DRTF1/E2F complex functions in the control of cell-cycle progression from G1 to S phase. E2F1 binds preferentially RB1 in a cell-cycle dependent manner. It can mediate both cell proliferation and TP53/p53-dependent apoptosis. Blocks adipocyte differentiation by binding to specific promoters repressing CEBPA binding to its target gene promoters. Directly activates transcription of PEG10. Positively regulates transcription of RRP1B. This Rattus norvegicus (Rat) protein is Transcription factor E2F1.